The following is a 234-amino-acid chain: Zinc transport system ATP-binding protein AdcC (234 aa).

The ABC transporter domain occupies 4-234 (ITVEDLSFYY…HENGQEVGHA (231 aa)). 36–43 (GENGAAKT) lines the ATP pocket.

Belongs to the ABC transporter superfamily.

In terms of biological role, part of the ATP-driven transport system AdcABC for zinc. Required for transformability. The protein is Zinc transport system ATP-binding protein AdcC (adcC) of Streptococcus pneumoniae (strain ATCC BAA-255 / R6).